The sequence spans 155 residues: Non-secretory ribonuclease (155 aa).

A signal peptide spans 1–25 (MGPKLLESRLCLLLLLGLVLMLASC). Residue Lys-33 participates in substrate binding. Catalysis depends on His-38, which acts as the Proton acceptor. N-linked (GlcNAc...) asparagine glycosylation is present at Asn-41. Intrachain disulfides connect Cys-47-Cys-106, Cys-61-Cys-118, Cys-79-Cys-133, and Cys-86-Cys-94. Tyr-57 carries the post-translational modification 3'-nitrotyrosine. A substrate-binding site is contributed by 62 to 66 (KDINT). Asn-83, Asn-88, and Asn-107 each carry an N-linked (GlcNAc...) asparagine glycan. His-150 acts as the Proton donor in catalysis.

The protein belongs to the pancreatic ribonuclease family. As to quaternary structure, interacts with and forms a tight 1:1 complex with RNH1. Dimerization of two such complexes may occur.

The protein resides in the lysosome. Its subcellular location is the cytoplasmic granule. It carries out the reaction an [RNA] containing cytidine + H2O = an [RNA]-3'-cytidine-3'-phosphate + a 5'-hydroxy-ribonucleotide-3'-[RNA].. It catalyses the reaction an [RNA] containing uridine + H2O = an [RNA]-3'-uridine-3'-phosphate + a 5'-hydroxy-ribonucleotide-3'-[RNA].. Its function is as follows. This is a non-secretory ribonuclease. It is a pyrimidine specific nuclease with a slight preference for U. Cytotoxin and helminthotoxin. Possesses a wide variety of biological activities. The chain is Non-secretory ribonuclease (Rnase2) from Mus musculus (Mouse).